Reading from the N-terminus, the 1708-residue chain is Rapamycin-insensitive companion of mTOR (1708 aa).

The segment at 1 to 789 (MAAIGRGRSL…DKANLHALIQ (789 aa)) is interaction with NBN. Ser21, Ser35, and Ser265 each carry phosphoserine. Lys274 is covalently cross-linked (Glycyl lysine isopeptide (Lys-Gly) (interchain with G-Cter in ubiquitin)). The ribosome-binding domain stretch occupies residues 521-570 (LKDTEEALLINLRDSQVLQHKENLEWNWNLIGTILKWPNVNLRNYKDEQL). 3 residues coordinate ATP: Asn543, Arg572, and Arg576. Residues 1022-1041 (LSLNSESTSSRHNSESESVP) are disordered. N6-acetyllysine occurs at positions 1092 and 1095. Thr1103 bears the Phosphothreonine mark. Residues 1103–1134 (TLPNKKHRSSSDPKGGKLSSESKTSNRRIRTL) are disordered. 3 positions are modified to N6-acetyllysine: Lys1116, Lys1119, and Lys1125. The residue at position 1135 (Thr1135) is a Phosphothreonine; by RPS6KB1. 3 positions are modified to phosphoserine: Ser1138, Ser1162, and Ser1219. A disordered region spans residues 1204-1252 (VVESSTSSHMKIRSQSFNTDTTTSGISSMSSSPSRETVGVDATTMDTDC). The span at 1206–1221 (ESSTSSHMKIRSQSFN) shows a compositional bias: polar residues. A compositionally biased stretch (low complexity) spans 1222–1240 (TDTTTSGISSMSSSPSRET). Ser1235 carries the post-translational modification Phosphoserine; by GSK3-beta. Thr1271 is subject to Phosphothreonine. Ser1274, Ser1278, Ser1282, and Ser1284 each carry phosphoserine. Positions 1275–1288 (NHLSLSKSNSVSLV) are enriched in low complexity. The segment at 1275–1298 (NHLSLSKSNSVSLVPPGSSHTLPR) is disordered. Residue Thr1295 is modified to Phosphothreonine. A phosphoserine mark is found at Ser1302 and Ser1313. Phosphothreonine is present on Thr1332. Residues Ser1346 and Ser1353 each carry the phosphoserine modification. Thr1376 carries the phosphothreonine modification. Ser1385 carries the post-translational modification Phosphoserine. Residue Tyr1386 is modified to Phosphotyrosine. Phosphoserine occurs at positions 1388, 1396, and 1411. Zn(2+)-binding residues include His1515, Cys1520, and Cys1523. Ser1571, Ser1574, Ser1577, and Ser1591 each carry phosphoserine. Residue Cys1651 participates in Zn(2+) binding. Thr1695 bears the Phosphothreonine; by GSK3-alpha and GSK3-beta mark.

This sequence belongs to the RICTOR family. Component of the mechanistic target of rapamycin complex 2 (mTORC2), consisting in two heterotretramers composed of MTOR, MLST8, RICTOR and MAPKAP1/SIN1. The mTORC2 core complex associates with PRR5/PROTOR1 and/or PRR5L/PROTOR2. Contrary to mTORC1, mTORC2 does not bind to and is not sensitive to FKBP12-rapamycin. Binds directly to MTOR and PRR5 within the TORC2 complex; interaction with MTOR is enhanced by deubiquitination of RICTOR by USP9X. Interaction with MAPKAP1 is not enhanced by RICTOR deubiquitination by USP9X. Interacts with CCDC28B. Interacts with NBN. Interacts with SIK3. Interacts with NCKAP1L. Interacts with kinases GSK3A and GSK3B; the interactions lead to phosphorylation of RICTOR at Thr-1695 which facilitates its FBXW7-mediated ubiquitination and subsequent degradation. Interacts with FBXW7; the interaction is enhanced by GSK3-mediated phosphorylation of Thr-1695 and results in RICTOR ubiquitination and degradation. Interacts with ARMH4 (via cytoplasmic tail); this interaction bridges ARMH4 to the mTORC2 complex and inhibits the mTORC2 kinase activity. Interacts with UBXN2A. Interacts with TSPAN8. As to quaternary structure, (Microbial infection) Interacts with vaccinia virus protein F17; this interaction dysregulates MTOR. Post-translationally, phosphorylated by MTOR; when part of mTORC2. Phosphorylated at Thr-1135 by RPS6KB1 downstream of the mTORC1 complex: phosphorylation of RICTOR inhibits mTORC2 signaling by creating a binding site for 14-3-3 proteins. Phosphorylated at Thr-1695 by GSK3A and GSK3B which facilitates RICTOR ubiquitination and subsequent degradation. Phosphorylated at Ser-1235 by GSK3B in response to endoplasmic stress, inhibiting mTORC2 signaling. In terms of processing, ubiquitinated by the SCF(FBXW7) complex, leading to its degradation by the proteasome. Deubiquitinated by USP9X; deubiquitination stabilizes RICTOR and enhances its binding to MTOR, thus promoting mTORC2 complex assembly. Acetylated by EP300/p300 in response to glucose, leading to activate the mTORC2 complex. Acetylation by BLOC1S1/GCN5L1 in response to hypotoxic stress protects RICTOR against ubiquitination and subsequent degradation by the proteasome.

It is found in the cell membrane. The protein localises to the endoplasmic reticulum membrane. It localises to the lysosome membrane. Component of the mechanistic target of rapamycin complex 2 (mTORC2), which transduces signals from growth factors to pathways involved in proliferation, cytoskeletal organization, lipogenesis and anabolic output. In response to growth factors, mTORC2 phosphorylates and activates AGC protein kinase family members, including AKT (AKT1, AKT2 and AKT3), PKC (PRKCA, PRKCB and PRKCE) and SGK1. In contrast to mTORC1, mTORC2 is nutrient-insensitive. Within the mTORC2 complex, RICTOR probably acts as a molecular adapter. RICTOR is responsible for the FKBP12-rapamycin-insensitivity of mTORC2. mTORC2 plays a critical role in AKT1 activation by mediating phosphorylation of different sites depending on the context, such as 'Thr-450', 'Ser-473', 'Ser-477' or 'Thr-479', facilitating the phosphorylation of the activation loop of AKT1 on 'Thr-308' by PDPK1/PDK1 which is a prerequisite for full activation. mTORC2 catalyzes the phosphorylation of SGK1 at 'Ser-422' and of PRKCA on 'Ser-657'. The mTORC2 complex also phosphorylates various proteins involved in insulin signaling, such as FBXW8 and IGF2BP1. mTORC2 acts upstream of Rho GTPases to regulate the actin cytoskeleton, probably by activating one or more Rho-type guanine nucleotide exchange factors. mTORC2 promotes the serum-induced formation of stress-fibers or F-actin. This is Rapamycin-insensitive companion of mTOR from Homo sapiens (Human).